The following is a 215-amino-acid chain: Large ribosomal subunit protein uL16 (215 aa).

This sequence belongs to the universal ribosomal protein uL16 family. Component of the large ribosomal subunit.

The protein localises to the cytoplasm. Component of the large ribosomal subunit. Plays a role in the formation of actively translating ribosomes. Plays a role in the embryonic brain development. The polypeptide is Large ribosomal subunit protein uL16 (Danio rerio (Zebrafish)).